The following is a 397-amino-acid chain: MYFLLNLVGLIVIMAVVFLCSPQKKKIKWRPIITLIVLELLITWFMLGTKVGSWAIGKIGDFFTWLIACASDGIAFAFPSVMANETVDFFFSALLPIIFIVTFFDILTYFGILPWLIDKIGWVISKASRLPKLESFFSIQMMFLGNTEALAVIRQQLTVLSNNRLLTFGLMSMSSISGSIIGSYLSMVPATYVFTAIPLNCLNALIIANLLNPVHVPEDEDIIYTPPKEEKKDFFSTISNSMLVGMNMVIVILAMVIGYVALTSAVNGILGVFVHGLTIQTIFAYLFSPFAFLLGLPVHDAMYVAQLMGMKLATNEFVAMLDLKNNLKSLPPHTVAVATTFLTSFANFSTVGMIYGTYNSILDGEKSTVIGRNVWKLLVSGIAVSLLSAAIVGLFVW.

11 helical membrane passes run 1 to 21 (MYFL…FLCS), 32 to 52 (IITL…TKVG), 62 to 82 (FFTW…PSVM), 97 to 117 (IIFI…PWLI), 133 to 153 (LESF…LAVI), 165 to 185 (LLTF…GSYL), 187 to 207 (MVPA…ALII), 242 to 262 (MLVG…YVAL), 282 to 302 (IFAY…HDAM), 335 to 355 (VAVA…GMIY), and 377 to 397 (LLVS…LFVW).

This sequence belongs to the concentrative nucleoside transporter (CNT) (TC 2.A.41) family.

The protein resides in the cell membrane. Its function is as follows. Involved in the uptake of the purine ribonucleosides inosine and guanosine. This is Purine nucleoside transport protein NupG (nupG) from Bacillus subtilis (strain 168).